A 374-amino-acid polypeptide reads, in one-letter code: Putative phosphoserine aminotransferase (374 aa).

Arg-48 is an L-glutamate binding site. Residues 82–83 (AT), Phe-106, Thr-152, Asp-174, and Gln-197 contribute to the pyridoxal 5'-phosphate site. Lys-198 is modified (N6-(pyridoxal phosphate)lysine). Pyridoxal 5'-phosphate is bound at residue 249–250 (NT).

It belongs to the class-V pyridoxal-phosphate-dependent aminotransferase family. SerC subfamily. Homodimer. Pyridoxal 5'-phosphate is required as a cofactor.

The protein localises to the cytoplasm. It catalyses the reaction O-phospho-L-serine + 2-oxoglutarate = 3-phosphooxypyruvate + L-glutamate. It carries out the reaction 4-(phosphooxy)-L-threonine + 2-oxoglutarate = (R)-3-hydroxy-2-oxo-4-phosphooxybutanoate + L-glutamate. Its pathway is amino-acid biosynthesis; L-serine biosynthesis; L-serine from 3-phospho-D-glycerate: step 2/3. It participates in cofactor biosynthesis; pyridoxine 5'-phosphate biosynthesis; pyridoxine 5'-phosphate from D-erythrose 4-phosphate: step 3/5. Its function is as follows. Catalyzes the reversible conversion of 3-phosphohydroxypyruvate to phosphoserine and of 3-hydroxy-2-oxo-4-phosphonooxybutanoate to phosphohydroxythreonine. The polypeptide is Putative phosphoserine aminotransferase (Mycobacterium avium (strain 104)).